We begin with the raw amino-acid sequence, 477 residues long: Protein DETOXIFICATION 5 (477 aa).

Helical transmembrane passes span 38-58 (AAPMATVTVSQYLLPVISVMV), 72-92 (LATAFANVSGFGIMYGLVGAL), 113-133 (FSAIVSNVPIVVLISILWFYM), 146-166 (ISKVAGSYAVCLIPALLAQAV), 187-207 (AITTLLFHIPVCLILVYAFGL), 211-231 (GAALAIGLSYWFNVLILALYV), 263-283 (AAMTTIEWSLFELLILSSGLL), 292-312 (VLSICLTTSSLHCVIPMGIGA), 333-353 (AVFAGIFLWFLEATICSTLLF), 376-396 (LSSLLCLSFMVDGFSSVLDGV), 411-431 (VVAYYLLGAPVGFFLGFWGHM), and 436-456 (LWIGVIVGSTAQGIILAIVTA).

The protein belongs to the multi antimicrobial extrusion (MATE) (TC 2.A.66.1) family.

It localises to the membrane. The chain is Protein DETOXIFICATION 5 from Arabidopsis thaliana (Mouse-ear cress).